The primary structure comprises 594 residues: Keratin, type II cytoskeletal 2 oral (594 aa).

The head stretch occupies residues 1–164 (MSRQACKKSF…DPQIGQVKAQ (164 aa)). An omega-N-methylarginine mark is found at arginine 85 and arginine 104. A coil 1A region spans residues 165 to 200 (EREQIKTLNNKFASFIDKVRFLEQQNKVLETKWELL). The IF rod domain occupies 165–480 (EREQIKTLNN…KLLEGEECRL (316 aa)). The interval 201 to 221 (QQQTIRSGSGPQNLEPFFESY) is linker 1. Residues 222–313 (ISCLRKQLDS…TLYDMELSQI (92 aa)) are coil 1B. A linker 12 region spans residues 314–337 (QSHVSDTSVVLSMDNNRCLDLDSI). Positions 338–476 (IAEVKAQYED…ATYRKLLEGE (139 aa)) are coil 2. The tail stretch occupies residues 477 to 594 (ECRLSGEFQN…TTSSSQQRSK (118 aa)). Residues 497 to 594 (TSTSSSGSFR…TTSSSQQRSK (98 aa)) are disordered. Over residues 506 to 522 (RGTGGSNYGGDSSGRSG) the composition is skewed to gly residues. Over residues 523–551 (GSSSSSSRGSSSRGSSGSRLGSGGSISVS) the composition is skewed to low complexity. Omega-N-methylarginine is present on arginine 541. The segment covering 552–564 (QQRMGFNSGGSQT) has biased composition (polar residues). The span at 565-594 (SVGSSYKSGRGGSSSVQFSQTTSSSQQRSK) shows a compositional bias: low complexity.

It belongs to the intermediate filament family. In terms of assembly, heterotetramer of two type I and two type II keratins.

In terms of biological role, probably contributes to terminal cornification. The polypeptide is Keratin, type II cytoskeletal 2 oral (Mus musculus (Mouse)).